Reading from the N-terminus, the 241-residue chain is Phosphoadenosine 5'-phosphosulfate reductase (241 aa).

Cysteine 235 acts as the Nucleophile; cysteine thiosulfonate intermediate in catalysis.

It belongs to the PAPS reductase family. CysH subfamily.

The protein localises to the cytoplasm. The catalysed reaction is [thioredoxin]-disulfide + sulfite + adenosine 3',5'-bisphosphate + 2 H(+) = [thioredoxin]-dithiol + 3'-phosphoadenylyl sulfate. Its pathway is sulfur metabolism; hydrogen sulfide biosynthesis; sulfite from sulfate: step 3/3. Catalyzes the formation of sulfite from phosphoadenosine 5'-phosphosulfate (PAPS) using thioredoxin as an electron donor. This is Phosphoadenosine 5'-phosphosulfate reductase from Xanthomonas campestris pv. campestris (strain 8004).